The following is a 158-amino-acid chain: Acetolactate synthase small subunit (158 aa).

The ACT domain occupies 4–78; sequence ILSVLLENES…DVLRVIKVGQ (75 aa).

It belongs to the acetolactate synthase small subunit family. In terms of assembly, dimer of large and small chains.

The catalysed reaction is 2 pyruvate + H(+) = (2S)-2-acetolactate + CO2. The protein operates within amino-acid biosynthesis; L-isoleucine biosynthesis; L-isoleucine from 2-oxobutanoate: step 1/4. Its pathway is amino-acid biosynthesis; L-valine biosynthesis; L-valine from pyruvate: step 1/4. The sequence is that of Acetolactate synthase small subunit (ilvH) from Buchnera aphidicola subsp. Schizaphis graminum (strain Sg).